Consider the following 37-residue polypeptide: Large ribosomal subunit protein bL36c (37 aa).

In terms of assembly, component of the chloroplast large ribosomal subunit (LSU). Mature 70S chloroplast ribosomes of higher plants consist of a small (30S) and a large (50S) subunit. The 30S small subunit contains 1 molecule of ribosomal RNA (16S rRNA) and 24 different proteins. The 50S large subunit contains 3 rRNA molecules (23S, 5S and 4.5S rRNA) and 33 different proteins.

The protein resides in the plastid. It is found in the chloroplast. Functionally, component of the chloroplast ribosome (chloro-ribosome), a dedicated translation machinery responsible for the synthesis of chloroplast genome-encoded proteins, including proteins of the transcription and translation machinery and components of the photosynthetic apparatus. In Spinacia oleracea (Spinach), this protein is Large ribosomal subunit protein bL36c (rpl36).